A 352-amino-acid polypeptide reads, in one-letter code: tRNA pseudouridine synthase D (352 aa).

Residue D81 is the Nucleophile of the active site. The TRUD domain maps to 157-303 (GIPNYFGAQR…MSHERRILRL (147 aa)).

Belongs to the pseudouridine synthase TruD family.

It carries out the reaction uridine(13) in tRNA = pseudouridine(13) in tRNA. Responsible for synthesis of pseudouridine from uracil-13 in transfer RNAs. The polypeptide is tRNA pseudouridine synthase D (Pseudomonas fluorescens (strain Pf0-1)).